The following is a 266-amino-acid chain: ATP synthase subunit a (266 aa).

5 helical membrane-spanning segments follow: residues 28–48 (SINVDSMFFSIALGILFLVIF), 88–108 (LIAPLALTIFVWVFLMNLMDL), 141–161 (DVNITLSMALGVFILVLFYSI), 206–226 (LFGNMYAGELIFILIAGLLPW), and 237–257 (AIFHILIITLQAFIFMVLTVV).

It belongs to the ATPase A chain family. In terms of assembly, F-type ATPases have 2 components, CF(1) - the catalytic core - and CF(0) - the membrane proton channel. CF(1) has five subunits: alpha(3), beta(3), gamma(1), delta(1), epsilon(1). CF(0) has three main subunits: a(1), b(2) and c(9-12). The alpha and beta chains form an alternating ring which encloses part of the gamma chain. CF(1) is attached to CF(0) by a central stalk formed by the gamma and epsilon chains, while a peripheral stalk is formed by the delta and b chains.

The protein resides in the cell inner membrane. Key component of the proton channel; it plays a direct role in the translocation of protons across the membrane. In Pectobacterium carotovorum subsp. carotovorum (strain PC1), this protein is ATP synthase subunit a.